A 341-amino-acid polypeptide reads, in one-letter code: Phosphate acyltransferase (341 aa).

It belongs to the PlsX family. As to quaternary structure, homodimer. Probably interacts with PlsY.

It localises to the cytoplasm. It catalyses the reaction a fatty acyl-[ACP] + phosphate = an acyl phosphate + holo-[ACP]. The protein operates within lipid metabolism; phospholipid metabolism. In terms of biological role, catalyzes the reversible formation of acyl-phosphate (acyl-PO(4)) from acyl-[acyl-carrier-protein] (acyl-ACP). This enzyme utilizes acyl-ACP as fatty acyl donor, but not acyl-CoA. The protein is Phosphate acyltransferase of Idiomarina loihiensis (strain ATCC BAA-735 / DSM 15497 / L2-TR).